A 267-amino-acid polypeptide reads, in one-letter code: MEMO1 family protein MA_0601 (267 aa).

The protein belongs to the MEMO1 family.

The protein is MEMO1 family protein MA_0601 of Methanosarcina acetivorans (strain ATCC 35395 / DSM 2834 / JCM 12185 / C2A).